The sequence spans 484 residues: Hexokinase-2 (484 aa).

One can recognise a Hexokinase domain in the interval 21-467 (PQLLEALKPI…SGVGAAVIAA (447 aa)). Residues 75–208 (TGKETGSYLA…GVPIDVVALI (134 aa)) are hexokinase small subdomain. Positions 209–456 (NDTTGTLVAS…DPIIIVPAED (248 aa)) are hexokinase large subdomain.

The protein belongs to the hexokinase family. As to quaternary structure, monomer.

It localises to the cytoplasm. It catalyses the reaction a D-hexose + ATP = a D-hexose 6-phosphate + ADP + H(+). It carries out the reaction D-fructose + ATP = D-fructose 6-phosphate + ADP + H(+). The catalysed reaction is D-glucose + ATP = D-glucose 6-phosphate + ADP + H(+). The protein operates within carbohydrate metabolism; hexose metabolism. It functions in the pathway carbohydrate degradation; glycolysis; D-glyceraldehyde 3-phosphate and glycerone phosphate from D-glucose: step 1/4. Its function is as follows. Catalyzes the phosphorylation of hexose, such as D-glucose and D-fructose, to hexose 6-phosphate (D-glucose 6-phosphate and D-fructose 6-phosphate, respectively). Mediates the initial step of glycolysis by catalyzing phosphorylation of D-glucose to D-glucose 6-phosphate. This is Hexokinase-2 (HXK2) from Candida albicans (strain SC5314 / ATCC MYA-2876) (Yeast).